The sequence spans 302 residues: uncharacterized protein (302 aa).

The S4 RNA-binding domain occupies 13–89; that stretch reads QTLFKFLKKT…VNLDIVYEDN (77 aa). D141 is an active-site residue.

It belongs to the pseudouridine synthase RluA family.

It catalyses the reaction a uridine in RNA = a pseudouridine in RNA. This is an uncharacterized protein from Mycoplasma capricolum subsp. capricolum (strain California kid / ATCC 27343 / NCTC 10154).